Here is a 1134-residue protein sequence, read N- to C-terminus: Vinculin (1134 aa).

The N-terminal globular head stretch occupies residues 1-835 (MPVFHTRTIE…GAVAKVREAF (835 aa)). Ser97 is subject to Phosphoserine. The tract at residues 168–208 (MTKMAKMIDERQQELTHQEHRVMLVNSMNTVKELLPVLISA) is talin-interaction. Lys173 bears the N6-acetyllysine mark. 3 repeat units span residues 259 to 369 (ASKD…KVEN), 370 to 479 (AARK…KTNR), and 480 to 589 (AVAN…RMQE). Residues 259–589 (ASKDTEAMKR…LKDLKARMQE (331 aa)) form a 3 X 112 AA tandem repeats region. A phosphoserine mark is found at Ser260, Ser272, Ser275, Ser288, Ser290, Ser346, and Ser434. The residue at position 496 (Lys496) is an N6-acetyllysine. Tyr537 is subject to Phosphotyrosine. A phosphoserine mark is found at Ser574, Ser579, and Ser600. Thr604 and Thr672 each carry phosphothreonine. Residue Ser721 is modified to Phosphoserine. The tract at residues 741 to 764 (MANIQPQMLVAGATSIARRANRIL) is interaction with ACTN4. Phosphoserine occurs at positions 795 and 809. A Phosphotyrosine modification is found at Tyr822. A linker (Pro-rich) region spans residues 836–878 (QPQEPDFPPPPPDLEQLRLTDELAPPKPPLPEGEVPPPRPPPP). A disordered region spans residues 857 to 887 (ELAPPKPPLPEGEVPPPRPPPPEEKDEEFPE). The segment covering 860 to 876 (PPKPPLPEGEVPPPRPP) has biased composition (pro residues). A C-terminal tail region spans residues 879-1134 (EEKDEEFPEQ…RWVRKTPWYQ (256 aa)). 2 facilitates phospholipid membrane insertion regions span residues 1003-1046 (RLVR…KRIR) and 1120-1134 (AGFT…PWYQ). A Phosphotyrosine; by SRC-type Tyr-kinases modification is found at Tyr1133.

This sequence belongs to the vinculin/alpha-catenin family. Exhibits self-association properties. Part of a complex composed of THSD1, PTK2/FAK1, TLN1 and VCL. Interacts with APBB1IP and NRAP. Interacts with TLN1. Interacts with CTNNB1 and this interaction is necessary for its localization to the cell-cell junctions and for its function in regulating cell surface expression of E-cadherin. Interacts with SYNM. Interacts with SORBS1. Interacts with CTNNA1. Binds to ACTN4; this interaction triggers conformational changes. Interacts with FLII. As to quaternary structure, (Microbial infection) Interacts via its globular head domain with the central portion of S.flexneri IcsA (also called VirG). In terms of processing, phosphorylated; on serines, threonines and tyrosines. Phosphorylation on Tyr-1133 in activated platelets affects head-tail interactions and cell spreading but has no effect on actin binding nor on localization to focal adhesion plaques. Acetylated; mainly by myristic acid but also by a small amount of palmitic acid. Metavinculin is muscle-specific.

It is found in the cell membrane. Its subcellular location is the cell junction. The protein resides in the adherens junction. The protein localises to the focal adhesion. It localises to the cytoplasm. It is found in the cytoskeleton. Its subcellular location is the sarcolemma. The protein resides in the cell projection. The protein localises to the podosome. Actin filament (F-actin)-binding protein involved in cell-matrix adhesion and cell-cell adhesion. Regulates cell-surface E-cadherin expression and potentiates mechanosensing by the E-cadherin complex. May also play important roles in cell morphology and locomotion. In Homo sapiens (Human), this protein is Vinculin (VCL).